A 62-amino-acid chain; its full sequence is Large ribosomal subunit protein bL28 (62 aa).

The protein belongs to the bacterial ribosomal protein bL28 family.

The protein is Large ribosomal subunit protein bL28 of Staphylococcus haemolyticus (strain JCSC1435).